The primary structure comprises 598 residues: Ecto-NOX disulfide-thiol exchanger 2 (598 aa).

The region spanning 99-178 (KTVFVGGLPE…GRLHVDFAQA (80 aa)) is the RRM domain. Coiled-coil stretches lie at residues 264–299 (IQSANSHVRRLVNEKATHEKEMEEAKEKFKQALSGI) and 352–476 (RREE…KQEN).

This sequence belongs to the ENOX family. The cofactor is Cu cation. Glycosylated.

The protein localises to the cell membrane. Its subcellular location is the secreted. The protein resides in the extracellular space. Its activity is regulated as follows. Inhibited by the antitumor sulfonylurea LY181984, the vabilloid capsaicin, and retinoids. May be involved in cell growth. Probably acts as a terminal oxidase of plasma electron transport from cytosolic NAD(P)H via hydroquinones to acceptors at the cell surface. Hydroquinone oxidase activity alternates with a protein disulfide-thiol interchange/oxidoreductase activity which may control physical membrane displacements associated with vesicle budding or cell enlargement. The activities oscillate with a period length of 22 minutes and play a role in control of the ultradian cellular biological clock. This Mus musculus (Mouse) protein is Ecto-NOX disulfide-thiol exchanger 2 (Enox2).